We begin with the raw amino-acid sequence, 259 residues long: MSLSSLAISANNISYRIGSKIILDDINLELRCGEVTTLLGPNGAGKSTLLKLLCDEITSFNDIRYFGKAKDQWDGNELAKRLGVLPQHSTLSFAFNVNEVVELGGLPLSLSNQALREITSNMMQKTVIKHLAERAYPSLSGGEKQRVHLARVLTQVSQHQQKIVMLDEPTSALDLSHQHNTLKLARELASEGAAVIVVLHDLNLAAQYSDRVIVLQDGKLQADGAPWEAITSKMIENVYGHKTLVQAHPTLNFPVVFAA.

The 235-residue stretch at 8–242 folds into the ABC transporter domain; sequence ISANNISYRI…KMIENVYGHK (235 aa). 40 to 47 is an ATP binding site; the sequence is GPNGAGKS.

Belongs to the ABC transporter superfamily. Heme (hemin) importer (TC 3.A.1.14.5) family. In terms of assembly, the complex is composed of two ATP-binding proteins (HmuV), two transmembrane proteins (HmuU) and a solute-binding protein (HmuT).

It localises to the cell inner membrane. Functionally, part of the ABC transporter complex HmuTUV involved in hemin import. Responsible for energy coupling to the transport system. The chain is Hemin import ATP-binding protein HmuV from Aliivibrio fischeri (strain ATCC 700601 / ES114) (Vibrio fischeri).